Consider the following 626-residue polypeptide: 4-hydroxy-3-methylbut-2-en-1-yl diphosphate synthase (flavodoxin) (626 aa).

C521, C524, C555, and E562 together coordinate [4Fe-4S] cluster.

This sequence belongs to the IspG family. The cofactor is [4Fe-4S] cluster.

The catalysed reaction is (2E)-4-hydroxy-3-methylbut-2-enyl diphosphate + oxidized [flavodoxin] + H2O + 2 H(+) = 2-C-methyl-D-erythritol 2,4-cyclic diphosphate + reduced [flavodoxin]. It participates in isoprenoid biosynthesis; isopentenyl diphosphate biosynthesis via DXP pathway; isopentenyl diphosphate from 1-deoxy-D-xylulose 5-phosphate: step 5/6. Its function is as follows. Converts 2C-methyl-D-erythritol 2,4-cyclodiphosphate (ME-2,4cPP) into 1-hydroxy-2-methyl-2-(E)-butenyl 4-diphosphate. The protein is 4-hydroxy-3-methylbut-2-en-1-yl diphosphate synthase (flavodoxin) of Bacteroides fragilis (strain YCH46).